Consider the following 406-residue polypeptide: E3 ubiquitin-protein ligase RING1 (406 aa).

The residue at position 24 (Thr24) is a Phosphothreonine. A necessary for transcriptional repression region spans residues 30–234; that stretch reads MDGTEIAVSP…GGAGSEDSGD (205 aa). Ser38 bears the Phosphoserine mark. The RING-type zinc finger occupies 48 to 88; it reads CPICLDMLKNTMTTKECLHRFCSDCIVTALRSGNKECPTCR. Residues Ser140, Ser187, and Ser190 each carry the phosphoserine modification. Disordered regions lie at residues 151–263 and 309–354; these read HRAQ…GEIE and QQQE…PSLE. Positions 175–187 are enriched in acidic residues; sequence EPGEGEGDGEDIS. The Nuclear localization signal motif lies at 201–204; that stretch reads KRPR. Over residues 205 to 228 the composition is skewed to gly residues; sequence GGGAGGSSVGTGGGAAGGACGGAG. Thr215 bears the Phosphothreonine mark. A phosphoserine mark is found at Ser229 and Ser232. Positions 230–406 are necessary for interaction with CBX2; sequence EDSGDRGGTL…LCYAPTKDPK (177 aa). The segment covering 235–244 has biased composition (gly residues); the sequence is RGGTLGGGTL. Over residues 246 to 258 the composition is skewed to pro residues; the sequence is PPSPPGAPSPPEP. Phosphoserine is present on residues Ser248 and Ser254. Residues 317 to 343 are compositionally biased toward gly residues; it reads GGPGGGASDTGGPDGGGGERGVSGGGE.

In terms of assembly, component of chromatin-associated Polycomb (PcG) complexes. Part of the E2F6.com-1 complex in G0 phase composed of E2F6, MGA, MAX, TFDP1, CBX3, BAT8, EUHMTASE1, RING1, RNF2/RING2 MBLR, L3MBTL2 and YAF2. Interacts with CBX2 and PCGF6. Component of a PRC1-like complex. Component of repressive BCOR complex containing Polycomb group subcomplex at least composed of RYBP, PCGF1, BCOR and RNF2/RING2. Interacts with BMI1, PHC2, PCGF2, RNF2; CBX6, CBX7 and CBX8. Interacts with MN1. Interacts with USP26.

Its subcellular location is the nucleus speckle. It carries out the reaction S-ubiquitinyl-[E2 ubiquitin-conjugating enzyme]-L-cysteine + [acceptor protein]-L-lysine = [E2 ubiquitin-conjugating enzyme]-L-cysteine + N(6)-ubiquitinyl-[acceptor protein]-L-lysine.. It participates in protein modification; protein ubiquitination. Functionally, constitutes one of the E3 ubiquitin-protein ligases that mediate monoubiquitination of 'Lys-119' of histone H2A, thereby playing a central role in histone code and gene regulation. H2A 'Lys-119' ubiquitination gives a specific tag for epigenetic transcriptional repression and participates in X chromosome inactivation of female mammals. Essential component of a Polycomb group (PcG) multiprotein PRC1-like complex, a complex class required to maintain the transcriptionally repressive state of many genes, including Hox genes, throughout development. PcG PRC1 complex acts via chromatin remodeling and modification of histones, rendering chromatin heritably changed in its expressibility. Compared to RNF2/RING2, it does not have the main E3 ubiquitin ligase activity on histone H2A, and it may rather act as a modulator of RNF2/RING2 activity. The sequence is that of E3 ubiquitin-protein ligase RING1 from Rattus norvegicus (Rat).